The chain runs to 150 residues: UPF0179 protein Mbur_1033 (150 aa).

It belongs to the UPF0179 family.

The protein is UPF0179 protein Mbur_1033 of Methanococcoides burtonii (strain DSM 6242 / NBRC 107633 / OCM 468 / ACE-M).